Here is an 837-residue protein sequence, read N- to C-terminus: Outer membrane usher protein HifC (837 aa).

An N-terminal signal peptide occupies residues 1–26 (MKTKNFPLNKIAFACTLLLANPVAWA). Cys813 and Cys833 form a disulfide bridge.

The protein belongs to the fimbrial export usher family.

The protein localises to the cell outer membrane. Its function is as follows. Essential for piliation. The chain is Outer membrane usher protein HifC (hifC) from Haemophilus influenzae.